Reading from the N-terminus, the 195-residue chain is Imidazoleglycerol-phosphate dehydratase (195 aa).

It belongs to the imidazoleglycerol-phosphate dehydratase family.

The protein localises to the cytoplasm. The catalysed reaction is D-erythro-1-(imidazol-4-yl)glycerol 3-phosphate = 3-(imidazol-4-yl)-2-oxopropyl phosphate + H2O. It participates in amino-acid biosynthesis; L-histidine biosynthesis; L-histidine from 5-phospho-alpha-D-ribose 1-diphosphate: step 6/9. In Frankia casuarinae (strain DSM 45818 / CECT 9043 / HFP020203 / CcI3), this protein is Imidazoleglycerol-phosphate dehydratase.